Here is a 234-residue protein sequence, read N- to C-terminus: Ubiquinone biosynthesis O-methyltransferase (234 aa).

S-adenosyl-L-methionine contacts are provided by Arg40, Gly59, Asp80, and Met123.

Belongs to the methyltransferase superfamily. UbiG/COQ3 family.

The catalysed reaction is a 3-demethylubiquinol + S-adenosyl-L-methionine = a ubiquinol + S-adenosyl-L-homocysteine + H(+). It catalyses the reaction a 3-(all-trans-polyprenyl)benzene-1,2-diol + S-adenosyl-L-methionine = a 2-methoxy-6-(all-trans-polyprenyl)phenol + S-adenosyl-L-homocysteine + H(+). It functions in the pathway cofactor biosynthesis; ubiquinone biosynthesis. In terms of biological role, O-methyltransferase that catalyzes the 2 O-methylation steps in the ubiquinone biosynthetic pathway. The chain is Ubiquinone biosynthesis O-methyltransferase from Coxiella burnetii (strain CbuG_Q212) (Coxiella burnetii (strain Q212)).